The sequence spans 176 residues: Mitochondrial inner membrane protein Mpv17 (176 aa).

Transmembrane regions (helical) follow at residues 18-38 (VQVL…QQLV), 53-73 (TMVS…YKVL), 94-114 (GGFA…LNGM), and 131-151 (LITN…LVPL).

This sequence belongs to the peroxisomal membrane protein PXMP2/4 family. As to expression, high levels in heart, kidney, and brain, intermediate levels in testis, and low levels in liver and spleen.

It is found in the mitochondrion inner membrane. Non-selective channel that modulates the membrane potential under normal conditions and oxidative stress, and is involved in mitochondrial homeostasis. Involved in mitochondrial deoxynucleoside triphosphates (dNTP) pool homeostasis and mitochondrial DNA (mtDNA) maintenance. May be involved in the regulation of reactive oxygen species metabolism and the control of oxidative phosphorylation. The protein is Mitochondrial inner membrane protein Mpv17 of Mus musculus (Mouse).